The chain runs to 263 residues: tRNA pseudouridine synthase A (263 aa).

Asp-53 acts as the Nucleophile in catalysis. Tyr-111 is a binding site for substrate. Residues 232–263 are disordered; it reads TAPGHGLISGRSNMTNGKLENNKTTNPCVTKY. Residues 241–263 are compositionally biased toward polar residues; that stretch reads GRSNMTNGKLENNKTTNPCVTKY.

This sequence belongs to the tRNA pseudouridine synthase TruA family. As to quaternary structure, homodimer.

It catalyses the reaction uridine(38/39/40) in tRNA = pseudouridine(38/39/40) in tRNA. Functionally, formation of pseudouridine at positions 38, 39 and 40 in the anticodon stem and loop of transfer RNAs. This is tRNA pseudouridine synthase A from Halalkalibacterium halodurans (strain ATCC BAA-125 / DSM 18197 / FERM 7344 / JCM 9153 / C-125) (Bacillus halodurans).